Here is a 388-residue protein sequence, read N- to C-terminus: Chorismate synthase (388 aa).

NADP(+) is bound by residues Arg-40 and Arg-46. Residues 131–133, 252–253, Gly-296, 311–315, and Arg-337 contribute to the FMN site; these read RSS, NA, and KPIPT.

The protein belongs to the chorismate synthase family. As to quaternary structure, homotetramer. The cofactor is FMNH2.

The enzyme catalyses 5-O-(1-carboxyvinyl)-3-phosphoshikimate = chorismate + phosphate. It functions in the pathway metabolic intermediate biosynthesis; chorismate biosynthesis; chorismate from D-erythrose 4-phosphate and phosphoenolpyruvate: step 7/7. Its function is as follows. Catalyzes the anti-1,4-elimination of the C-3 phosphate and the C-6 proR hydrogen from 5-enolpyruvylshikimate-3-phosphate (EPSP) to yield chorismate, which is the branch point compound that serves as the starting substrate for the three terminal pathways of aromatic amino acid biosynthesis. This reaction introduces a second double bond into the aromatic ring system. This chain is Chorismate synthase, found in Limosilactobacillus fermentum (strain NBRC 3956 / LMG 18251) (Lactobacillus fermentum).